The primary structure comprises 724 residues: RINT1-like protein (724 aa).

Positions 163–724 (RLHAVQAQSL…LERRMDIKMF (562 aa)) constitute an RINT1/TIP20 domain.

Belongs to the RINT1 family.

During cytokinesis in male meiotic cells, required for completion of cleavage furrow ingression possibly in conjunction with Zw10. Required for maintenance of Golgi stack number and morphology. Essential for acroblast assembly. This chain is RINT1-like protein, found in Drosophila melanogaster (Fruit fly).